Reading from the N-terminus, the 246-residue chain is 3-deoxy-manno-octulosonate cytidylyltransferase (246 aa).

It belongs to the KdsB family.

It is found in the cytoplasm. The catalysed reaction is 3-deoxy-alpha-D-manno-oct-2-ulosonate + CTP = CMP-3-deoxy-beta-D-manno-octulosonate + diphosphate. The protein operates within nucleotide-sugar biosynthesis; CMP-3-deoxy-D-manno-octulosonate biosynthesis; CMP-3-deoxy-D-manno-octulosonate from 3-deoxy-D-manno-octulosonate and CTP: step 1/1. It functions in the pathway bacterial outer membrane biogenesis; lipopolysaccharide biosynthesis. Its function is as follows. Activates KDO (a required 8-carbon sugar) for incorporation into bacterial lipopolysaccharide in Gram-negative bacteria. This Leptospira borgpetersenii serovar Hardjo-bovis (strain JB197) protein is 3-deoxy-manno-octulosonate cytidylyltransferase.